Here is a 476-residue protein sequence, read N- to C-terminus: Cytochrome c oxidase subunit 1 (476 aa).

The chain crosses the membrane as a helical span at residues 19 to 39 (LYYLWFSFLFGTYGFLLSVIL). Glu42 is a binding site for Ca(2+). 8 helical membrane-spanning segments follow: residues 61 to 81 (MIFT…GLFG), 105 to 125 (ISLL…AAEF), 144 to 164 (LSPV…IASI), 194 to 214 (IIIT…GVLM), 240 to 260 (LFWF…FGVI), 278 to 298 (MILA…HHMY), 309 to 329 (FFTS…FNWL), and 345 to 365 (LLCL…VILG). His66 serves as a coordination point for Fe(II)-heme a. His246 is a Cu cation binding site. Positions 246–250 (HPEVY) form a cross-link, 1'-histidyl-3'-tyrosine (His-Tyr). An O2-binding site is contributed by Tyr250. Residues His295 and His296 each contribute to the Cu cation site. Positions 374 and 375 each coordinate Mg(2+). The next 2 helical transmembrane spans lie at 379 to 399 (VIAH…FTCV) and 415 to 435 (TLIV…FLPM). His382 is a binding site for heme a3. His384 contributes to the Fe(II)-heme a binding site. Pro448 contributes to the Ca(2+) binding site. Residues 455-475 (NGWNMICSIGSTMTLFGLLIF) form a helical membrane-spanning segment.

This sequence belongs to the heme-copper respiratory oxidase family. As to quaternary structure, component of the cytochrome c oxidase (complex IV, CIV), a multisubunit enzyme composed of a catalytic core of 3 subunits and several supernumerary subunits. The complex exists as a monomer or a dimer and forms supercomplexes (SCs) in the inner mitochondrial membrane with ubiquinol-cytochrome c oxidoreductase (cytochrome b-c1 complex, complex III, CIII). The cofactor is heme. Requires Cu cation as cofactor.

The protein localises to the mitochondrion inner membrane. It catalyses the reaction 4 Fe(II)-[cytochrome c] + O2 + 8 H(+)(in) = 4 Fe(III)-[cytochrome c] + 2 H2O + 4 H(+)(out). It functions in the pathway energy metabolism; oxidative phosphorylation. Its function is as follows. Component of the cytochrome c oxidase, the last enzyme in the mitochondrial electron transport chain which drives oxidative phosphorylation. The respiratory chain contains 3 multisubunit complexes succinate dehydrogenase (complex II, CII), ubiquinol-cytochrome c oxidoreductase (cytochrome b-c1 complex, complex III, CIII) and cytochrome c oxidase (complex IV, CIV), that cooperate to transfer electrons derived from NADH and succinate to molecular oxygen, creating an electrochemical gradient over the inner membrane that drives transmembrane transport and the ATP synthase. Cytochrome c oxidase is the component of the respiratory chain that catalyzes the reduction of oxygen to water. Electrons originating from reduced cytochrome c in the intermembrane space (IMS) are transferred via the dinuclear copper A center (CU(A)) of subunit 2 and heme A of subunit 1 to the active site in subunit 1, a binuclear center (BNC) formed by heme A3 and copper B (CU(B)). The BNC reduces molecular oxygen to 2 water molecules using 4 electrons from cytochrome c in the IMS and 4 protons from the mitochondrial matrix. The sequence is that of Cytochrome c oxidase subunit 1 (COI) from Plasmodium berghei.